A 516-amino-acid chain; its full sequence is GMP synthase [glutamine-hydrolyzing] (516 aa).

One can recognise a Glutamine amidotransferase type-1 domain in the interval 8–198; that stretch reads KILILDFGSQ…VVNICGCDTL (191 aa). Cys84 acts as the Nucleophile in catalysis. Residues His172 and Glu174 contribute to the active site. Residues 199–391 form the GMPS ATP-PPase domain; the sequence is WNIENIIEND…LGLPYNMLYR (193 aa). 226–232 serves as a coordination point for ATP; it reads SGGVDSS.

In terms of assembly, homodimer.

The catalysed reaction is XMP + L-glutamine + ATP + H2O = GMP + L-glutamate + AMP + diphosphate + 2 H(+). It functions in the pathway purine metabolism; GMP biosynthesis; GMP from XMP (L-Gln route): step 1/1. Functionally, catalyzes the synthesis of GMP from XMP. The protein is GMP synthase [glutamine-hydrolyzing] of Francisella tularensis subsp. holarctica (strain LVS).